Here is a 318-residue protein sequence, read N- to C-terminus: Ankyrin repeat and SOCS box protein 7 (318 aa).

ANK repeat units lie at residues 13–42 (QEEL…SPNG), 46–75 (NGWT…DPTV), 80–109 (GGFT…RSDI), 116–145 (DGWT…EVDP), 149–178 (KGTT…NIDI), 180–208 (NGFL…DTDL), and 213–242 (DGQT…DTNT). The 54-residue stretch at 265-318 (LDFLQEVTRQPRNLQDLCRIKIRQCIGLQNLKLLDELPIAKVMKDYLKHKFDDI) folds into the SOCS box domain.

The protein belongs to the ankyrin SOCS box (ASB) family. Interacts with CUL5. Interacts with RNF7. Interacts with PSRC1.

It participates in protein modification; protein ubiquitination. Functionally, probable substrate-recognition component of a SCF-like ECS (Elongin-Cullin-SOCS-box protein) E3 ubiquitin-protein ligase complex which mediates the ubiquitination and subsequent proteasomal degradation of target proteins. Plays a role in spindle dynamics and genome integrity by targeting the mitotic progression protein PSRC1 for proteasomal degradation in a cell cycle-dependent manner. Also participates in meiosis by mediating the proper attachment between kinetochores and microtubules. The sequence is that of Ankyrin repeat and SOCS box protein 7 (ASB7) from Macaca fascicularis (Crab-eating macaque).